A 496-amino-acid chain; its full sequence is ATP-dependent protease ATPase subunit HslU2 (496 aa).

The transit peptide at 1–10 directs the protein to the mitochondrion; it reads MIRFSWVRLC. ATP is bound by residues Val-51 and 94-99; that span reads GVGKTE. Residues 177–191 show a composition bias toward low complexity; sequence GSFGSSTRNSGSGDS. A disordered region spans residues 177–204; the sequence is GSFGSSTRNSGSGDSSAEEDKNSSSRDN. ATP contacts are provided by Asp-308, Glu-374, and Arg-446.

It belongs to the ClpX chaperone family. HslU subfamily. As to quaternary structure, a double ring-shaped homohexamer of HslV is capped on each side by a ring-shaped HslU homohexamer. The assembly of the HslU/HslV complex (HslVU) is dependent on binding of ATP.

The protein resides in the mitochondrion matrix. The protein localises to the kinetoplast. ATPase subunit of a proteasome-like degradation complex; this subunit has chaperone activity. The binding of ATP and its subsequent hydrolysis by HslU are essential for unfolding of protein substrates subsequently hydrolyzed by HslV. HslU recognizes the N-terminal part of its protein substrates and unfolds these before they are guided to HslV for hydrolysis. The HslVU protease complex functions in mitochondrial DNA replication by regulating DNA helicase PIF2 protein levels. This is ATP-dependent protease ATPase subunit HslU2 (HslU2) from Trypanosoma brucei brucei (strain 927/4 GUTat10.1).